The sequence spans 250 residues: Coproheme decarboxylase (250 aa).

Fe-coproporphyrin III is bound by residues arginine 131, 145–149 (YPMNK), histidine 172, and glutamine 185. The active site involves tyrosine 145.

Belongs to the ChdC family. Type 1 subfamily. It depends on Fe-coproporphyrin III as a cofactor.

It carries out the reaction Fe-coproporphyrin III + 2 H2O2 + 2 H(+) = heme b + 2 CO2 + 4 H2O. It catalyses the reaction Fe-coproporphyrin III + H2O2 + H(+) = harderoheme III + CO2 + 2 H2O. The catalysed reaction is harderoheme III + H2O2 + H(+) = heme b + CO2 + 2 H2O. It functions in the pathway porphyrin-containing compound metabolism; protoheme biosynthesis. In terms of biological role, involved in coproporphyrin-dependent heme b biosynthesis. Catalyzes the decarboxylation of Fe-coproporphyrin III (coproheme) to heme b (protoheme IX), the last step of the pathway. The reaction occurs in a stepwise manner with a three-propionate intermediate. This chain is Coproheme decarboxylase, found in Staphylococcus aureus (strain MSSA476).